The following is a 660-amino-acid chain: Peroxisomal acyl-coenzyme A oxidase 1 (660 aa).

Ser26 is modified (phosphoserine). Residues Lys89 and Lys90 each carry the N6-succinyllysine modification. Thr139 and Gly178 together coordinate FAD. At Lys216 the chain carries N6-acetyllysine. Position 241 is an N6-succinyllysine (Lys241). An N6-acetyllysine mark is found at Lys255, Lys267, and Lys272. The residue at position 349 (Lys349) is an N6-succinyllysine. Catalysis depends on Glu421, which acts as the Proton acceptor. An N6-acetyllysine; alternate mark is found at Lys437 and Lys446. Lys437 and Lys446 each carry N6-succinyllysine; alternate. N6-acetyllysine occurs at positions 500 and 504. At Lys512 the chain carries N6-acetyllysine; alternate. Position 512 is an N6-succinyllysine; alternate (Lys512). Residue Lys542 is modified to N6-succinyllysine. Lys637 bears the N6-acetyllysine; alternate mark. The residue at position 637 (Lys637) is an N6-succinyllysine; alternate. An N6-succinyllysine modification is found at Lys643. The residue at position 649 (Ser649) is a Phosphoserine. An N6-acetyllysine modification is found at Lys651. Lys654 carries the post-translational modification N6-succinyllysine. The Microbody targeting signal motif lies at 658–660 (SKL).

It belongs to the acyl-CoA oxidase family. As to quaternary structure, homodimer. Interacts with LONP2. FAD is required as a cofactor. Widely expressed with highest levels of isoform 1 and isoform 2 detected in testis. Isoform 1 is expressed at higher levels than isoform 2 in liver and kidney while isoform 2 levels are higher in brain, lung, muscle, white adipose tissue and testis. Levels are almost equal in heart.

The protein resides in the peroxisome. It carries out the reaction a 2,3-saturated acyl-CoA + O2 = a (2E)-enoyl-CoA + H2O2. The catalysed reaction is hexadecanoyl-CoA + O2 = (2E)-hexadecenoyl-CoA + H2O2. The enzyme catalyses dodecanoyl-CoA + O2 = (2E)-dodecenoyl-CoA + H2O2. It catalyses the reaction octanoyl-CoA + O2 = (2E)-octenoyl-CoA + H2O2. It carries out the reaction decanoyl-CoA + O2 = (2E)-decenoyl-CoA + H2O2. The catalysed reaction is tetradecanoyl-CoA + O2 = (2E)-tetradecenoyl-CoA + H2O2. The enzyme catalyses hexadecanedioyl-CoA + O2 = (2E)-hexadecenedioyl-CoA + H2O2. It catalyses the reaction (5Z,8Z,11Z,14Z,17Z)-eicosapentaenoyl-CoA + O2 = (2E,5Z,8Z,11Z,14Z,17Z)-icosahexaenoyl-CoA + H2O2. It carries out the reaction tetracosanoyl-CoA + O2 = (2E)-tetracosenoyl-CoA + H2O2. The catalysed reaction is glutaryl-CoA + O2 = (2E)-glutaconyl-CoA + H2O2. The enzyme catalyses hexanoyl-CoA + O2 = (2E)-hexenoyl-CoA + H2O2. It catalyses the reaction octadecanoyl-CoA + O2 = (2E)-octadecenoyl-CoA + H2O2. It carries out the reaction (6Z,9Z,12Z,15Z,18Z,21Z)-tetracosahexaenoyl-CoA + O2 = (2E,6Z,9Z,12Z,15Z,18Z,21Z)-tetracosaheptaenoyl-CoA + H2O2. The protein operates within lipid metabolism; peroxisomal fatty acid beta-oxidation. In terms of biological role, involved in the initial and rate-limiting step of peroxisomal beta-oxidation of straight-chain saturated and unsaturated very-long-chain fatty acids. Catalyzes the desaturation of fatty acyl-CoAs such as palmitoyl-CoA (hexadecanoyl-CoA) to 2-trans-enoyl-CoAs ((2E)-enoyl-CoAs) such as (2E)-hexadecenoyl-CoA, and donates electrons directly to molecular oxygen (O(2)), thereby producing hydrogen peroxide (H(2)O(2)). Shows highest activity against medium-chain fatty acyl-CoAs. Shows optimum activity with a chain length of 10 carbons (decanoyl-CoA) in vitro. Its function is as follows. Is active against a much broader range of substrates and shows activity towards long-chain fatty acyl-CoAs. This chain is Peroxisomal acyl-coenzyme A oxidase 1, found in Homo sapiens (Human).